Reading from the N-terminus, the 443-residue chain is tRNA-2-methylthio-N(6)-dimethylallyladenosine synthase (443 aa).

The MTTase N-terminal domain occupies 3–120 (SKLYIKTFGC…LPELIDARRR (118 aa)). The [4Fe-4S] cluster site is built by C12, C49, C83, C157, C161, and C164. One can recognise a Radical SAM core domain in the interval 143–377 (RTTGATAFVS…KIQRNAQMIS (235 aa)). Residues 378–441 (QSMVDTIQRV…SHTLRGEISD (64 aa)) form the TRAM domain.

This sequence belongs to the methylthiotransferase family. MiaB subfamily. Monomer. Requires [4Fe-4S] cluster as cofactor.

The protein localises to the cytoplasm. The catalysed reaction is N(6)-dimethylallyladenosine(37) in tRNA + (sulfur carrier)-SH + AH2 + 2 S-adenosyl-L-methionine = 2-methylsulfanyl-N(6)-dimethylallyladenosine(37) in tRNA + (sulfur carrier)-H + 5'-deoxyadenosine + L-methionine + A + S-adenosyl-L-homocysteine + 2 H(+). In terms of biological role, catalyzes the methylthiolation of N6-(dimethylallyl)adenosine (i(6)A), leading to the formation of 2-methylthio-N6-(dimethylallyl)adenosine (ms(2)i(6)A) at position 37 in tRNAs that read codons beginning with uridine. The chain is tRNA-2-methylthio-N(6)-dimethylallyladenosine synthase from Nitrosomonas eutropha (strain DSM 101675 / C91 / Nm57).